Here is a 173-residue protein sequence, read N- to C-terminus: Alpha-crystallin A chain (173 aa).

Methionine 1 is modified (N-acetylmethionine). The required for complex formation with BFSP1 and BFSP2 stretch occupies residues 1–63; sequence MDVTIQHPWF…RTVLDSGISE (63 aa). At glutamine 6 the chain carries Deamidated glutamine; partial. Serine 45 carries the post-translational modification Phosphoserine. Residue glutamine 50 is modified to Deamidated glutamine; partial. One can recognise a sHSP domain in the interval 52–162; that stretch reads LFRTVLDSGI…GHSERAIPVS (111 aa). The residue at position 99 (lysine 99) is an N6-acetyllysine. Histidine 100 is a Zn(2+) binding site. Deamidated asparagine; partial is present on asparagine 101. Zn(2+)-binding residues include glutamate 102 and histidine 107. The residue at position 122 (serine 122) is a Phosphoserine. At asparagine 123 the chain carries Deamidated asparagine; partial. The cysteines at positions 131 and 142 are disulfide-linked. Residues 146 to 173 form a disordered region; it reads VQSSMDDGHSERAIPVSREEKPSSVPSS. Position 147 is a deamidated glutamine; partial (glutamine 147). Positions 151–167 are enriched in basic and acidic residues; sequence DDGHSERAIPVSREEKP. Residue histidine 154 coordinates Zn(2+). Serine 162 carries O-linked (GlcNAc) serine glycosylation.

This sequence belongs to the small heat shock protein (HSP20) family. Heteromer composed of three CRYAA and one CRYAB subunits. Inter-subunit bridging via zinc ions enhances stability, which is crucial as there is no protein turn over in the lens. Can also form homodimers and homotetramers (dimers of dimers) which serve as the building blocks of homooligomers. Within homooligomers, the zinc-binding motif is created from residues of 3 different molecules. His-100 and Glu-102 from one molecule are ligands of the zinc ion, and His-107 and His-154 residues from additional molecules complete the site with tetrahedral coordination geometry. Part of a complex required for lens intermediate filament formation composed of BFSP1, BFSP2 and CRYAA. Undergoes age-dependent proteolytical cleavage at the C-terminus.

It localises to the cytoplasm. The protein localises to the nucleus. Contributes to the transparency and refractive index of the lens. In its oxidized form (absence of intramolecular disulfide bond), acts as a chaperone, preventing aggregation of various proteins under a wide range of stress conditions. Required for the correct formation of lens intermediate filaments as part of a complex composed of BFSP1, BFSP2 and CRYAA. The protein is Alpha-crystallin A chain (CRYAA) of Orycteropus afer (Aardvark).